Here is a 624-residue protein sequence, read N- to C-terminus: Chaperone protein DnaK (624 aa).

A Phosphothreonine; by autocatalysis modification is found at T174. 2 disordered regions span residues 470-504 and 577-624; these read ITIK…KEEV and NGGA…DPDK. Basic and acidic residues predominate over residues 481–504; the sequence is EEIKKMQKDAEEHAEEDKKRKEEV. Residues 577–605 show a composition bias toward low complexity; sequence NGGAQGAAGQAGPQGPQNGGQPNNDNGSD. A compositionally biased stretch (basic and acidic residues) spans 615-624; the sequence is GDFHKVDPDK.

It belongs to the heat shock protein 70 family.

Functionally, acts as a chaperone. The protein is Chaperone protein DnaK of Lactobacillus johnsonii (strain CNCM I-12250 / La1 / NCC 533).